The sequence spans 515 residues: FADH(2)-dependent monooxygenase TftD (515 aa).

A substrate-binding site is contributed by 100 to 104 (RLPDA). Residues 151 to 153 (LNF), 157 to 160 (QTDR), and Thr192 each bind FAD. Residue 203-204 (GC) coordinates substrate. Residue 457–460 (TMTR) participates in FAD binding.

This sequence belongs to the FADH(2)-utilizing monooxygenase family. In terms of assembly, homotetramer. The chlorophenol-4-monooxygenase is composed of an oxygenase component TftD and a reductase component TftC.

It functions in the pathway xenobiotic degradation. Its function is as follows. Oxygenase component of a two-component system that degrades 2,4,5-trichlorophenol. Uses FADH(2) supplied by TftC to oxidize 2,4,5-trichlorophenol (2,4,5-TCP) to 2,5-dichloro-p-benzoquinone, which is chemically reduced to 2,5-dichloro-p-hydroquinone (2,5-DiCHQ). Then, TftD oxidizes the latter to 5-chloro-2-hydroxy-p-benzoquinone. The sequence is that of FADH(2)-dependent monooxygenase TftD (tftD) from Burkholderia cepacia (Pseudomonas cepacia).